Reading from the N-terminus, the 791-residue chain is 1-phosphatidylinositol 4,5-bisphosphate phosphodiesterase delta-4 (791 aa).

Residues 16–124 (LLMQKGTMMR…WMQGLQLLVG (109 aa)) form the PH domain. The substrate binding stretch occupies residues 26 to 53 (KVRSKSWKKLRFFRLQDDGMTVWHARQA). EF-hand domains lie at 134–169 (RLDQ…MNVE), 170–205 (MDQE…LTQR), and 207–237 (EVQE…EQKE). Ca(2+) is bound by residues D147, N149, D151, R153, E158, D183, S185, S187, T189, and E194. The GBA signature appears at 213–243 (EKFSSDGQKLTLLEFVDFLQEEQKEGERASD). In terms of domain architecture, PI-PLC X-box spans 290 to 435 (QDMTQPLNHY…LRGKILVKGK (146 aa)). Residue H305 is part of the active site. N306, E335, and D337 together coordinate Ca(2+). H350 is an active-site residue. E384 is a binding site for Ca(2+). 4 residues coordinate substrate: K433, K435, S551, and R578. The 117-residue stretch at 522–638 (LSALVVYLKA…GYVLKPDFLR (117 aa)) folds into the PI-PLC Y-box domain. Positions 638–765 (RDAQSSFHPE…QGYRHIHLLS (128 aa)) constitute a C2 domain. Ca(2+) contacts are provided by I679, D681, N705, D734, Y735, and D736. Residues 760–763 (HIHL) carry the PDZ-binding motif.

As to quaternary structure, interacts with GRIP1. Interacts (via GBA motif) with guanine nucleotide-binding protein G(i) alpha subunit GNAI3 (inactive GDP-bound form); low-affinity interaction. It depends on Ca(2+) as a cofactor.

The protein resides in the membrane. It is found in the nucleus. Its subcellular location is the cytoplasm. The protein localises to the endoplasmic reticulum. It carries out the reaction a 1,2-diacyl-sn-glycero-3-phospho-(1D-myo-inositol-4,5-bisphosphate) + H2O = 1D-myo-inositol 1,4,5-trisphosphate + a 1,2-diacyl-sn-glycerol + H(+). It catalyses the reaction a 1,2-diacyl-sn-glycero-3-phospho-(1D-myo-inositol) + H2O = 1D-myo-inositol 1-phosphate + a 1,2-diacyl-sn-glycerol + H(+). In terms of biological role, hydrolyzes the phosphatidylinositol 4,5-bisphosphate (PIP2) to generate 2 second messenger molecules diacylglycerol (DAG) and inositol 1,4,5-trisphosphate (IP3). DAG mediates the activation of protein kinase C (PKC), while IP3 releases Ca(2+) from intracellular stores. Required for acrosome reaction in sperm during fertilization, probably by acting as an important enzyme for intracellular Ca(2+) mobilization in the zona pellucida-induced acrosome reaction. May play a role in cell growth. Modulates the liver regeneration in cooperation with nuclear PKC. Overexpression up-regulates the Erk signaling pathway and proliferation. This is 1-phosphatidylinositol 4,5-bisphosphate phosphodiesterase delta-4 (PLCD4) from Bos taurus (Bovine).